Here is a 418-residue protein sequence, read N- to C-terminus: Tyrosine--tRNA ligase (418 aa).

Residue Tyr-34 participates in L-tyrosine binding. The short motif at 39 to 48 is the 'HIGH' region element; the sequence is PTADSLHLGH. Residues Tyr-169 and Gln-173 each contribute to the L-tyrosine site. The 'KMSKS' region motif lies at 229–233; it reads KFGKS. Lys-232 contacts ATP. The region spanning 352–418 is the S4 RNA-binding domain; it reads NNIVELLVSS…GKKKYFVLTY (67 aa).

This sequence belongs to the class-I aminoacyl-tRNA synthetase family. TyrS type 1 subfamily. In terms of assembly, homodimer.

The protein resides in the cytoplasm. It carries out the reaction tRNA(Tyr) + L-tyrosine + ATP = L-tyrosyl-tRNA(Tyr) + AMP + diphosphate + H(+). Catalyzes the attachment of tyrosine to tRNA(Tyr) in a two-step reaction: tyrosine is first activated by ATP to form Tyr-AMP and then transferred to the acceptor end of tRNA(Tyr). This is Tyrosine--tRNA ligase from Streptococcus pneumoniae serotype 19F (strain G54).